The following is a 724-amino-acid chain: Ribosomal protein S6 kinase alpha-1 (724 aa).

Residue serine 54 is modified to Phosphoserine. Residues 62 to 310 enclose the Protein kinase 1 domain; the sequence is FELLKVLGQG…AEEIKRHIFY (249 aa). ATP is bound by residues 68-76 and lysine 94; that span reads LGQGSFGKV. Aspartate 187 acts as the Proton acceptor in catalysis. The residue at position 221 (serine 221) is a Phosphoserine; by PDPK1. Position 296 is a phosphoserine (serine 296). The AGC-kinase C-terminal domain occupies 311–380; it reads STIDWNKLYR…VATGLMEDDG (70 aa). At threonine 348 the chain carries Phosphothreonine. 3 positions are modified to phosphoserine: serine 352, serine 358, and serine 369. Positions 407–664 constitute a Protein kinase 2 domain; that stretch reads YVVKETIGVG…AKQVLQHPWI (258 aa). ATP contacts are provided by residues 413–421 and lysine 436; that span reads IGVGSYSVC. The active-site Proton acceptor is the aspartate 524. The residue at position 562 (threonine 562) is a Phosphothreonine. Position 721 is a phosphoserine (serine 721).

The protein belongs to the protein kinase superfamily. AGC Ser/Thr protein kinase family. S6 kinase subfamily. In terms of assembly, forms a complex with either MAPK1/ERK2 or MAPK3/ERK1 in quiescent cells. Transiently dissociates following mitogenic stimulation. Interacts with ETV1/ER81 and FGFR1. The cofactor is Mg(2+). Post-translationally, activated by phosphorylation at Ser-221 by PDPK1. Autophosphorylated on Ser-369, as part of the activation process. May be phosphorylated at Thr-348 and Ser-352 by MAPK1/ERK2 and MAPK3/ERK1. N-terminal myristoylation results in an activated kinase in the absence of added growth factors. As to expression, intestine, thymus, and lung.

It is found in the nucleus. Its subcellular location is the cytoplasm. It carries out the reaction L-seryl-[protein] + ATP = O-phospho-L-seryl-[protein] + ADP + H(+). It catalyses the reaction L-threonyl-[protein] + ATP = O-phospho-L-threonyl-[protein] + ADP + H(+). Upon extracellular signal or mitogen stimulation, phosphorylated at Thr-562 in the C-terminal kinase domain (CTKD) by MAPK1/ERK2 and MAPK3/ERK1. The activated CTKD then autophosphorylates Ser-369, allowing binding of PDPK1, which in turn phosphorylates Ser-221 in the N-terminal kinase domain (NTDK) leading to the full activation of the protein and subsequent phosphorylation of the substrates by the NTKD. In terms of biological role, serine/threonine-protein kinase that acts downstream of ERK (MAPK1/ERK2 and MAPK3/ERK1) signaling and mediates mitogenic and stress-induced activation of the transcription factors CREB1, ETV1/ER81 and NR4A1/NUR77, regulates translation through RPS6 and EIF4B phosphorylation, and mediates cellular proliferation, survival, and differentiation by modulating mTOR signaling and repressing pro-apoptotic function of BAD and DAPK1. In fibroblast, is required for EGF-stimulated phosphorylation of CREB1, which results in the subsequent transcriptional activation of several immediate-early genes. In response to mitogenic stimulation (EGF and PMA), phosphorylates and activates NR4A1/NUR77 and ETV1/ER81 transcription factors and the cofactor CREBBP. Upon insulin-derived signal, acts indirectly on the transcription regulation of several genes by phosphorylating GSK3B at 'Ser-9' and inhibiting its activity. Phosphorylates RPS6 in response to serum or EGF via an mTOR-independent mechanism and promotes translation initiation by facilitating assembly of the pre-initiation complex. In response to insulin, phosphorylates EIF4B, enhancing EIF4B affinity for the EIF3 complex and stimulating cap-dependent translation. Is involved in the mTOR nutrient-sensing pathway by directly phosphorylating TSC2 at 'Ser-1798', which potently inhibits TSC2 ability to suppress mTOR signaling, and mediates phosphorylation of RPTOR, which regulates mTORC1 activity and may promote rapamycin-sensitive signaling independently of the PI3K/AKT pathway. Also involved in feedback regulation of mTORC1 and mTORC2 by phosphorylating DEPTOR. Mediates cell survival by phosphorylating the pro-apoptotic proteins BAD and DAPK1 and suppressing their pro-apoptotic function. Promotes the survival of hepatic stellate cells by phosphorylating CEBPB in response to the hepatotoxin carbon tetrachloride (CCl4). Mediates induction of hepatocyte prolifration by TGFA through phosphorylation of CEBPB. Is involved in cell cycle regulation by phosphorylating the CDK inhibitor CDKN1B, which promotes CDKN1B association with 14-3-3 proteins and prevents its translocation to the nucleus and inhibition of G1 progression. Phosphorylates EPHA2 at 'Ser-897', the RPS6KA-EPHA2 signaling pathway controls cell migration. In response to mTORC1 activation, phosphorylates EIF4B at 'Ser-406' and 'Ser-422' which stimulates bicarbonate cotransporter SLC4A7 mRNA translation, increasing SLC4A7 protein abundance and function. The sequence is that of Ribosomal protein S6 kinase alpha-1 (Rps6ka1) from Mus musculus (Mouse).